We begin with the raw amino-acid sequence, 450 residues long: ADP-specific phosphofructokinase (450 aa).

In terms of domain architecture, ADPK spans 1–449; it reads MIPEHLSIYT…FLTYLEFLKR (449 aa). Residues glutamate 260, glutamate 290, and aspartate 433 each contribute to the Mg(2+) site. Aspartate 433 functions as the Proton acceptor in the catalytic mechanism.

Belongs to the carbohydrate kinase PfkC family. Mg(2+) serves as cofactor.

The protein localises to the cytoplasm. The catalysed reaction is beta-D-fructose 6-phosphate + ADP = beta-D-fructose 1,6-bisphosphate + AMP + H(+). The protein operates within carbohydrate degradation; glycolysis. In terms of biological role, catalyzes the phosphorylation of fructose 6-phosphate to fructose 1,6-bisphosphate using ADP as the phosphate donor. This is ADP-specific phosphofructokinase from Pyrococcus horikoshii (strain ATCC 700860 / DSM 12428 / JCM 9974 / NBRC 100139 / OT-3).